A 615-amino-acid chain; its full sequence is Dihydroxy-acid dehydratase (615 aa).

Residue D81 coordinates Mg(2+). C122 is a [2Fe-2S] cluster binding site. Residues D123 and K124 each contribute to the Mg(2+) site. K124 carries the post-translational modification N6-carboxylysine. C195 serves as a coordination point for [2Fe-2S] cluster. Residue E491 participates in Mg(2+) binding. Residue S517 is the Proton acceptor of the active site.

It belongs to the IlvD/Edd family. In terms of assembly, homodimer. It depends on [2Fe-2S] cluster as a cofactor. The cofactor is Mg(2+).

It carries out the reaction (2R)-2,3-dihydroxy-3-methylbutanoate = 3-methyl-2-oxobutanoate + H2O. The catalysed reaction is (2R,3R)-2,3-dihydroxy-3-methylpentanoate = (S)-3-methyl-2-oxopentanoate + H2O. It participates in amino-acid biosynthesis; L-isoleucine biosynthesis; L-isoleucine from 2-oxobutanoate: step 3/4. It functions in the pathway amino-acid biosynthesis; L-valine biosynthesis; L-valine from pyruvate: step 3/4. Its function is as follows. Functions in the biosynthesis of branched-chain amino acids. Catalyzes the dehydration of (2R,3R)-2,3-dihydroxy-3-methylpentanoate (2,3-dihydroxy-3-methylvalerate) into 2-oxo-3-methylpentanoate (2-oxo-3-methylvalerate) and of (2R)-2,3-dihydroxy-3-methylbutanoate (2,3-dihydroxyisovalerate) into 2-oxo-3-methylbutanoate (2-oxoisovalerate), the penultimate precursor to L-isoleucine and L-valine, respectively. The chain is Dihydroxy-acid dehydratase from Shewanella halifaxensis (strain HAW-EB4).